A 40-amino-acid polypeptide reads, in one-letter code: Alpha-conotoxin-like Lp1.6b (40 aa).

Positions 1-23 (VVLGPASDGRNAAANNKASDLIR) are excised as a propeptide. Gln-24 is modified (pyrrolidone carboxylic acid). Cystine bridges form between Cys-26–Cys-32 and Cys-27–Cys-39.

The protein belongs to the conotoxin A superfamily. In terms of tissue distribution, expressed by the venom duct.

The protein localises to the secreted. Functionally, alpha-conotoxins act on postsynaptic membranes, they bind to the nicotinic acetylcholine receptors (nAChR) and thus inhibit them. This is Alpha-conotoxin-like Lp1.6b from Conus leopardus (Leopard cone).